The sequence spans 88 residues: Toxin RelE3 (88 aa).

The protein belongs to the RelE toxin family. As to quaternary structure, forms heterodimers with RelB3 and possibly a heterotetramer RelE3-RelB3(2)-RelE3 from 2 heterodimers. The heterotetramer is probably not very stable in solution.

Toxic component of a type II toxin-antitoxin (TA) system. Has RNase activity. Is very toxic upon expression in E.coli. Its toxic activity is probably neutralized by the cognate antitoxin RelB3. The protein is Toxin RelE3 (relE3) of Methanocaldococcus jannaschii (strain ATCC 43067 / DSM 2661 / JAL-1 / JCM 10045 / NBRC 100440) (Methanococcus jannaschii).